The following is a 299-amino-acid chain: HTH-type transcriptional regulator CysL (299 aa).

The HTH lysR-type domain maps to 1–58 (MYYDVLKTFIAVVEEKNFTKAAEKLMISQPSVSLHIKNLEKEFQTALLNRSPKHFTTT). Positions 18-37 (FTKAAEKLMISQPSVSLHIK) form a DNA-binding region, H-T-H motif.

This sequence belongs to the LysR transcriptional regulatory family.

Functionally, transcriptional activator of the cysJI operon which is involved in sulfur assimilation. Also negatively regulates its own transcription. The protein is HTH-type transcriptional regulator CysL (cysL) of Bacillus subtilis (strain 168).